A 147-amino-acid chain; its full sequence is 3-dehydroquinate dehydratase (147 aa).

Y23 acts as the Proton acceptor in catalysis. Positions 75, 81, and 88 each coordinate substrate. H101 (proton donor) is an active-site residue. Substrate-binding positions include L102–S103 and R112.

It belongs to the type-II 3-dehydroquinase family. Homododecamer.

The catalysed reaction is 3-dehydroquinate = 3-dehydroshikimate + H2O. It functions in the pathway metabolic intermediate biosynthesis; chorismate biosynthesis; chorismate from D-erythrose 4-phosphate and phosphoenolpyruvate: step 3/7. Catalyzes a trans-dehydration via an enolate intermediate. This is 3-dehydroquinate dehydratase from Thioalkalivibrio sulfidiphilus (strain HL-EbGR7).